Here is a 199-residue protein sequence, read N- to C-terminus: Phosphoheptose isomerase (199 aa).

The region spanning 36–198 is the SIS domain; the sequence is MSQCLLNEHK…DRKLIPSSED (163 aa). Position 51–53 (51–53) interacts with substrate; sequence NGG. Zn(2+) is bound by residues histidine 60 and glutamate 64. Substrate contacts are provided by residues glutamate 64, 93 to 94, 119 to 121, serine 124, and glutamine 174; these read ND and STS. Positions 174 and 182 each coordinate Zn(2+).

The protein belongs to the SIS family. GmhA subfamily. As to quaternary structure, homotetramer. It depends on Zn(2+) as a cofactor.

Its subcellular location is the cytoplasm. The catalysed reaction is 2 D-sedoheptulose 7-phosphate = D-glycero-alpha-D-manno-heptose 7-phosphate + D-glycero-beta-D-manno-heptose 7-phosphate. Its pathway is carbohydrate biosynthesis; D-glycero-D-manno-heptose 7-phosphate biosynthesis; D-glycero-alpha-D-manno-heptose 7-phosphate and D-glycero-beta-D-manno-heptose 7-phosphate from sedoheptulose 7-phosphate: step 1/1. Catalyzes the isomerization of sedoheptulose 7-phosphate in D-glycero-D-manno-heptose 7-phosphate. This is Phosphoheptose isomerase from Coxiella burnetii (strain RSA 331 / Henzerling II).